Consider the following 363-residue polypeptide: Phospho-N-acetylmuramoyl-pentapeptide-transferase (363 aa).

11 helical membrane-spanning segments follow: residues 27 to 47 (AGAACLTALAISLLLGNPLIA), 76 to 96 (TMGGVLILAALFGSTLLWADL), 97 to 117 (TDGYVWAVLLTTLSFGAVGFA), 137 to 157 (LGCEFAASLVGGYWMQSLMPA), 171 to 191 (WLLPLGFAFPLFAMITITGFG), 202 to 222 (GLAIVPVIIAALVFGLISYLV), 226 to 246 (VFADYLQLHAVPGTGELCVFC), 248 to 268 (ALVGAGLGFLWFNAPPAAVFM), 271 to 291 (TGSLSLGGALGAIAVAVKHEL), 292 to 312 (VLCIVGGLFVVETLSVIIQVF), and 340 to 360 (KIVIRFWIVSIVLGLCGLATL).

The protein belongs to the glycosyltransferase 4 family. MraY subfamily. Mg(2+) serves as cofactor.

The protein localises to the cell inner membrane. It catalyses the reaction UDP-N-acetyl-alpha-D-muramoyl-L-alanyl-gamma-D-glutamyl-meso-2,6-diaminopimeloyl-D-alanyl-D-alanine + di-trans,octa-cis-undecaprenyl phosphate = di-trans,octa-cis-undecaprenyl diphospho-N-acetyl-alpha-D-muramoyl-L-alanyl-D-glutamyl-meso-2,6-diaminopimeloyl-D-alanyl-D-alanine + UMP. It functions in the pathway cell wall biogenesis; peptidoglycan biosynthesis. Catalyzes the initial step of the lipid cycle reactions in the biosynthesis of the cell wall peptidoglycan: transfers peptidoglycan precursor phospho-MurNAc-pentapeptide from UDP-MurNAc-pentapeptide onto the lipid carrier undecaprenyl phosphate, yielding undecaprenyl-pyrophosphoryl-MurNAc-pentapeptide, known as lipid I. This is Phospho-N-acetylmuramoyl-pentapeptide-transferase from Gluconacetobacter diazotrophicus (strain ATCC 49037 / DSM 5601 / CCUG 37298 / CIP 103539 / LMG 7603 / PAl5).